Here is a 573-residue protein sequence, read N- to C-terminus: Urease subunit alpha (573 aa).

The region spanning 136–573 (GAIDCHVHLI…LPMAQRYFLF (438 aa)) is the Urease domain. Residues H141, H143, and K224 each coordinate Ni(2+). K224 bears the N6-carboxylysine mark. H226 contacts substrate. The Ni(2+) site is built by H253 and H279. The Proton donor role is filled by H327. Ni(2+) is bound at residue D367.

Belongs to the metallo-dependent hydrolases superfamily. Urease alpha subunit family. Heterotrimer of UreA (gamma), UreB (beta) and UreC (alpha) subunits. Three heterotrimers associate to form the active enzyme. Requires Ni cation as cofactor. Post-translationally, carboxylation allows a single lysine to coordinate two nickel ions.

It is found in the cytoplasm. It catalyses the reaction urea + 2 H2O + H(+) = hydrogencarbonate + 2 NH4(+). It functions in the pathway nitrogen metabolism; urea degradation; CO(2) and NH(3) from urea (urease route): step 1/1. This is Urease subunit alpha from Mycolicibacterium vanbaalenii (strain DSM 7251 / JCM 13017 / BCRC 16820 / KCTC 9966 / NRRL B-24157 / PYR-1) (Mycobacterium vanbaalenii).